The primary structure comprises 924 residues: Hexokinase-3 (924 aa).

Positions 1–27 (MAAIEPSGLHPGERDSSCPQEGIPRPS) are disordered. 2 consecutive Hexokinase domains span residues 27-471 (SGSL…MVTA) and 477-913 (ATHR…LVTR). The hexokinase small subdomain 1 stretch occupies residues 84–220 (HGTEQGDFLV…TYNIDVVAMV (137 aa)). Position 95–102 (95–102 (ELGATGAS)) interacts with ATP. 95–104 (ELGATGASLR) lines the D-glucose 6-phosphate pocket. D-glucose contacts are provided by residues serine 168, 185–186 (TK), and 221–222 (ND). The tract at residues 221-460 (NDTVGTMMGC…CDVSFIPSVD (240 aa)) is hexokinase large subdomain 1. Residues aspartate 222 and threonine 245 each coordinate D-glucose 6-phosphate. Residues asparagine 248, glutamate 273, and 304-307 (QRFE) each bind D-glucose. Residue 426 to 428 (GGR) participates in D-glucose 6-phosphate binding. Residues 438-439 (CI) and 542-547 (DLGGTN) contribute to the ATP site. The segment at 531-662 (DGSERGDFLA…AVELNVVAIV (132 aa)) is hexokinase small subdomain 2. 542–546 (DLGGT) is a binding site for D-glucose 6-phosphate. D-glucose contacts are provided by residues 610 to 611 (SF), 627 to 628 (TK), and 663 to 664 (ND). The hexokinase large subdomain 2 stretch occupies residues 663-902 (NDTVGTMMSC…CTVTFLQSED (240 aa)). D-glucose 6-phosphate contacts are provided by aspartate 664 and threonine 687. Residue threonine 687 participates in ATP binding. D-glucose-binding positions include 689–690 (TN), glutamate 715, and glutamate 749. Residues 754–755 (GM), 791–795 (TKFLS), and 870–874 (TLYKL) contribute to the ATP site. Residues 868–870 (DGT) and serine 904 contribute to the D-glucose 6-phosphate site.

It belongs to the hexokinase family.

The catalysed reaction is a D-hexose + ATP = a D-hexose 6-phosphate + ADP + H(+). It carries out the reaction D-fructose + ATP = D-fructose 6-phosphate + ADP + H(+). It catalyses the reaction D-glucose + ATP = D-glucose 6-phosphate + ADP + H(+). The protein operates within carbohydrate metabolism; hexose metabolism. Its pathway is carbohydrate degradation; glycolysis; D-glyceraldehyde 3-phosphate and glycerone phosphate from D-glucose: step 1/4. With respect to regulation, hexokinase is an allosteric enzyme inhibited by its product D-glucose 6-phosphate. In terms of biological role, catalyzes the phosphorylation of hexose, such as D-glucose and D-fructose, to hexose 6-phosphate (D-glucose 6-phosphate and D-fructose 6-phosphate, respectively). Mediates the initial step of glycolysis by catalyzing phosphorylation of D-glucose to D-glucose 6-phosphate. The sequence is that of Hexokinase-3 from Rattus norvegicus (Rat).